Reading from the N-terminus, the 1836-residue chain is InaD-like protein (1836 aa).

Positions 1 to 65 (MPENPAAEKM…SIKQLKGQLS (65 aa)) constitute an L27 domain. 3 PDZ domains span residues 134-221 (YIDI…AREV), 248-328 (DVEL…ARDP), and 365-453 (NVEL…VRRK). Residues Ser-455, Ser-459, and Ser-482 each carry the phosphoserine modification. Residues 456 to 466 (LSASPFEQPSS) show a composition bias toward polar residues. Residues 456 to 492 (LSASPFEQPSSREAVAEPPEVPELTGSLKPETNSRME) are disordered. The PDZ 4 domain maps to 555-641 (DEELQKYSKL…PFTLVCCRRL (87 aa)). Ser-647 is subject to Phosphoserine. PDZ domains follow at residues 687-773 (TVEL…ICKP) and 1074-1166 (PRIV…VVQS). Polar residues predominate over residues 1173 to 1191 (VIPSVNNKGKTPPQNQDQN). Residues 1173–1232 (VIPSVNNKGKTPPQNQDQNTQEKKAKRHGTAPPPMKLPPPYRAPSADTEESEEDSALTDK) are disordered. Over residues 1203–1214 (APPPMKLPPPYR) the composition is skewed to pro residues. Phosphoserine is present on Ser-1217. Residues 1219-1228 (DTEESEEDSA) show a composition bias toward acidic residues. The PDZ 7 domain occupies 1245-1328 (LHIIELEKDK…PTRVKLVFIR (84 aa)). A disordered region spans residues 1341–1448 (FPVPSHSPSP…ADVTGSGNFQ (108 aa)). Positions 1372–1383 (PLPERESSKPED) are enriched in basic and acidic residues. 2 stretches are compositionally biased toward polar residues: residues 1415 to 1426 (YSAQVSSSSQEI) and 1434 to 1448 (CQSTHADVTGSGNFQ). PDZ domains follow at residues 1472–1555 (EMII…VIYR) and 1568–1650 (VFLV…EIGR). Thr-1545 is modified (phosphothreonine). The disordered stretch occupies residues 1657–1678 (ASSRKTSQNSQGDQHSAHSSCR). Positions 1709-1795 (PRTVEIIREL…FGRIILQVVA (87 aa)) constitute a PDZ 10 domain. Residues 1813-1836 (SQLGSPTADRHPQDPEELLQRTAD) form a disordered region.

In terms of assembly, forms a ternary complex with PALS1 and CRB1. Component of a complex whose core is composed of ARHGAP17, AMOT, PALS1, INADL/PATJ and PARD3/PAR3. Forms a heterotrimeric complex composed of MMP5, LIN7B and PATJ; the N-terminal L27 domain of PALS1 interacts with the L27 domain of PATJ and the C-terminal L27 domain of PALS1 interacts with the L27 domain of LIN7B. Component of a complex composed of CRB3, PALS1 and PATJ. As part of the Crumbs complex; interacts with WWP1, the interaction is enhanced by AMOTL2 and facilitates WWP1 localization to the plasma membrane. The Crumbs complex promotes monoubiquitination of AMOTL2 by WWP1, which activates the Hippo signaling pathway. Interacts (via N-terminus) with PALS1/PALS (via PDZ domain). Interacts with TJP3/ZO-3 and CLDN1/claudin-1. Interacts with ASIC3, KCNJ10, KCNJ15, GRIN2A, GRIN2B, GRIN2C, GRIN2D, NLGN2, and HTR2A. Interacts with MPP7. Directly interacts with HTR4. Interacts (via PDZ domain 8) with WWC1 (via the ADDV motif). Interacts with SLC6A4. Interacts (via C-terminus) with ARHGEF18. Interacts with NPHP1. Interacts with PARD3/PAR3. Interacts (via PDZ1-6 domains) with TJP1/ZO1; the interaction is required for attachment and extension of TJP1/ZO1 condensates along the apical cell interface. Abundantly expressed in germ cells, also expressed in testes and seminiferous tubules, with faint expression in Sertoli cells (at protein level).

Its subcellular location is the cell junction. The protein resides in the tight junction. The protein localises to the apical cell membrane. It localises to the cytoplasm. It is found in the perinuclear region. Functionally, scaffolding protein that facilitates the localization of proteins to the cell membrane. Required for the correct formation of tight junctions and epithelial apico-basal polarity. Acts (via its L27 domain) as an apical connector and elongation factor for multistranded TJP1/ZO1 condensates that form a tight junction belt, thereby required for the formation of the tight junction-mediated cell barrier. Positively regulates epithelial cell microtubule elongation and cell migration, possibly via facilitating localization of PRKCI/aPKC and PAR3D/PAR3 at the leading edge of migrating cells. Plays a role in the correct reorientation of the microtubule-organizing center during epithelial migration. May regulate the surface expression and/or function of ASIC3 in sensory neurons. May recruit ARHGEF18 to apical cell-cell boundaries. This Rattus norvegicus (Rat) protein is InaD-like protein.